A 234-amino-acid polypeptide reads, in one-letter code: Proteasome subunit beta (234 aa).

The interval 1–35 (MNPDLNMNPHDSGRTDPYAPELGEIATDEGDGENV) is disordered. Residues 1–39 (MNPDLNMNPHDSGRTDPYAPELGEIATDEGDGENVTKTG) constitute a propeptide, removed in mature form; by autocatalysis. Threonine 40 (nucleophile) is an active-site residue.

The protein belongs to the peptidase T1B family. The 20S proteasome core is composed of 14 alpha and 14 beta subunits that assemble into four stacked heptameric rings, resulting in a barrel-shaped structure. The two inner rings, each composed of seven catalytic beta subunits, are sandwiched by two outer rings, each composed of seven alpha subunits. The catalytic chamber with the active sites is on the inside of the barrel. Has a gated structure, the ends of the cylinder being occluded by the N-termini of the alpha-subunits. Is capped at one or both ends by the proteasome regulatory ATPase, PAN.

It is found in the cytoplasm. It catalyses the reaction Cleavage of peptide bonds with very broad specificity.. With respect to regulation, the formation of the proteasomal ATPase PAN-20S proteasome complex, via the docking of the C-termini of PAN into the intersubunit pockets in the alpha-rings, triggers opening of the gate for substrate entry. Interconversion between the open-gate and close-gate conformations leads to a dynamic regulation of the 20S proteasome proteolysis activity. Its function is as follows. Component of the proteasome core, a large protease complex with broad specificity involved in protein degradation. The sequence is that of Proteasome subunit beta from Halorhabdus utahensis (strain DSM 12940 / JCM 11049 / AX-2).